We begin with the raw amino-acid sequence, 623 residues long: F-box protein FBX14 (623 aa).

Residues 18-48 (LNLNPPCSSSSSSSSAATFTNKSRNFKSSPP) form a disordered region. The segment covering 33 to 45 (AATFTNKSRNFKS) has biased composition (polar residues). One can recognise an F-box domain in the interval 54-97 (VLENVLENVLQFLTSRCDRNAVSLVCRSWYRVEAQTRLEVFIGN). Lys119 is a binding site for 1D-myo-inositol hexakisphosphate. The interval 126–127 (DF) is interaction with auxin-responsive proteins. 1D-myo-inositol hexakisphosphate is bound by residues 158–159 (KR) and Arg391. The tract at residues 394-399 (PFDPRE) is interaction with auxin-responsive proteins. Residue 447 to 449 (VFR) coordinates 1D-myo-inositol hexakisphosphate. Residues 451–455 (CIMGR) are interaction with auxin-responsive proteins. Arg482 serves as a coordination point for 1D-myo-inositol hexakisphosphate. Positions 510–511 (AF) are interaction with auxin-responsive proteins. 1D-myo-inositol hexakisphosphate-binding positions include 530–531 (QK) and Arg555.

Part of a SCF (SKP1-cullin-F-box) protein ligase complex. May interact with auxin and auxin-responsive proteins.

Its subcellular location is the nucleus. It functions in the pathway protein modification; protein ubiquitination. This Arabidopsis thaliana (Mouse-ear cress) protein is F-box protein FBX14 (FBX14).